The primary structure comprises 172 residues: NAD(P)H-quinone oxidoreductase subunit I, chloroplastic (172 aa).

2 4Fe-4S ferredoxin-type domains span residues 55 to 84 (GRIH…VDWK) and 95 to 124 (LNYS…MTEE). [4Fe-4S] cluster is bound by residues Cys64, Cys67, Cys70, Cys74, Cys104, Cys107, Cys110, and Cys114.

The protein belongs to the complex I 23 kDa subunit family. In terms of assembly, NDH is composed of at least 16 different subunits, 5 of which are encoded in the nucleus. [4Fe-4S] cluster serves as cofactor.

It localises to the plastid. Its subcellular location is the chloroplast thylakoid membrane. It catalyses the reaction a plastoquinone + NADH + (n+1) H(+)(in) = a plastoquinol + NAD(+) + n H(+)(out). The catalysed reaction is a plastoquinone + NADPH + (n+1) H(+)(in) = a plastoquinol + NADP(+) + n H(+)(out). Its function is as follows. NDH shuttles electrons from NAD(P)H:plastoquinone, via FMN and iron-sulfur (Fe-S) centers, to quinones in the photosynthetic chain and possibly in a chloroplast respiratory chain. The immediate electron acceptor for the enzyme in this species is believed to be plastoquinone. Couples the redox reaction to proton translocation, and thus conserves the redox energy in a proton gradient. The polypeptide is NAD(P)H-quinone oxidoreductase subunit I, chloroplastic (Capsella bursa-pastoris (Shepherd's purse)).